The sequence spans 357 residues: EGF-like domain-containing protein 2 (357 aa).

Positions 1–20 (MPPSLSHLFLLSTFASLALC) are cleaved as a signal peptide. EGF-like domains follow at residues 21-55 (SFYCKNPGYPCLNGGTCLYNGECNCTSGFRGFNCG) and 61-93 (ISAACTVECHNKGICFNGDKCYCTKDYMGPTCQ). Cystine bridges form between C24–C37, C31–C43, C45–C54, C65–C75, C69–C81, and C83–C92.

Prismatic layer of shell (at protein level). Expressed primarily in the mantle with highest level in the mantle edge and lower level in the mantle pallium.

The protein localises to the secreted. In Pinctada maxima (Silver-lipped pearl oyster), this protein is EGF-like domain-containing protein 2.